The primary structure comprises 230 residues: Large ribosomal subunit protein uL1 (230 aa).

The protein belongs to the universal ribosomal protein uL1 family. In terms of assembly, part of the 50S ribosomal subunit.

Functionally, binds directly to 23S rRNA. The L1 stalk is quite mobile in the ribosome, and is involved in E site tRNA release. Its function is as follows. Protein L1 is also a translational repressor protein, it controls the translation of the L11 operon by binding to its mRNA. In Leptospira borgpetersenii serovar Hardjo-bovis (strain JB197), this protein is Large ribosomal subunit protein uL1.